Consider the following 434-residue polypeptide: Homogentisate 1,2-dioxygenase (434 aa).

His-289 acts as the Proton acceptor in catalysis. Fe cation contacts are provided by His-332 and Glu-338. Homogentisate contacts are provided by Tyr-347 and His-368. A Fe cation-binding site is contributed by His-368.

Belongs to the homogentisate dioxygenase family. As to quaternary structure, hexamer; dimer of trimers. It depends on Fe cation as a cofactor.

It catalyses the reaction homogentisate + O2 = 4-maleylacetoacetate + H(+). It participates in amino-acid degradation; L-phenylalanine degradation; acetoacetate and fumarate from L-phenylalanine: step 4/6. Its function is as follows. Involved in the catabolism of homogentisate (2,5-dihydroxyphenylacetate or 2,5-OH-PhAc), a central intermediate in the degradation of phenylalanine and tyrosine. Catalyzes the oxidative ring cleavage of the aromatic ring of homogentisate to yield maleylacetoacetate. The chain is Homogentisate 1,2-dioxygenase from Pseudomonas syringae pv. tomato (strain ATCC BAA-871 / DC3000).